The sequence spans 235 residues: Probable deoxycytidine kinase FPV151 (235 aa).

ATP is bound at residue 30–38; that stretch reads GNISAGKST. Substrate contacts are provided by Glu-53, Tyr-68, and Gln-79. Catalysis depends on Glu-104, which acts as the Proton acceptor. The substrate site is built by Arg-105, Asp-110, and Glu-172.

This sequence belongs to the DCK/DGK family.

It catalyses the reaction 2'-deoxycytidine + a ribonucleoside 5'-triphosphate = dCMP + a ribonucleoside 5'-diphosphate + H(+). This Vertebrata (FPV) protein is Probable deoxycytidine kinase FPV151.